Here is a 1799-residue protein sequence, read N- to C-terminus: Putative neural-cadherin 2 (1799 aa).

N-linked (GlcNAc...) asparagine glycosylation is found at Asn13, Asn64, Asn86, Asn118, Asn195, Asn260, Asn264, Asn283, and Asn377. Cadherin domains follow at residues Asp37–Phe136, Asp137–Phe252, Pro253–Phe364, Glu368–Phe485, Asp486–Phe590, Phe590–Ser709, and Gly708–Met812. Residues Asn601, Asn793, Asn910, Asn948, and Asn969 are each glycosylated (N-linked (GlcNAc...) asparagine). The EGF-like 1 domain maps to Gln973–Gln1010. Disulfide bonds link Cys977–Cys988, Cys982–Cys997, Cys1000–Cys1009, Cys1191–Cys1217, Cys1224–Cys1239, Cys1233–Cys1248, and Cys1250–Cys1259. The 207-residue stretch at Gln1011–Cys1217 folds into the Laminin G-like 1 domain. The region spanning Thr1220–Asn1260 is the EGF-like 2 domain. Residues Thr1263–Cys1454 form the Laminin G-like 2 domain. N-linked (GlcNAc...) asparagine glycans are attached at residues Asn1376 and Asn1437. Disulfide bonds link Cys1419–Cys1454, Cys1501–Cys1512, Cys1506–Cys1523, and Cys1525–Cys1534. One can recognise an EGF-like 3; calcium-binding domain in the interval Asp1497–Glu1535. A helical transmembrane segment spans residues Ala1549–Leu1569. The disordered stretch occupies residues Ala1726 to Leu1799. Gly residues-rich tracts occupy residues Asp1733–Pro1744, Leu1752–Ile1763, and Ser1775–Ser1786.

It is found in the cell membrane. Cadherins are calcium-dependent cell adhesion proteins. They preferentially interact with themselves in a homophilic manner in connecting cells. This Drosophila melanogaster (Fruit fly) protein is Putative neural-cadherin 2 (CadN2).